The sequence spans 617 residues: Diacylglycerol O-acyltransferase 1 (617 aa).

Disordered regions lie at residues 1–52 (MEPI…ETER) and 95–186 (RNTN…PKQE). The segment covering 7-17 (SNGNKNNSMDK) has biased composition (polar residues). 2 stretches are compositionally biased toward low complexity: residues 18-34 (QPQQ…QQQQ) and 96-105 (NTNNNNQNNT). Residues 106–140 (SPTFSSANGKQSNLTQRKINTQIQSKQPTNNNVQP) are compositionally biased toward polar residues. Over residues 160–177 (QNNNGNNNNNNNNNNNNN) the composition is skewed to low complexity. The next 5 membrane-spanning stretches (helical) occupy residues 217 to 237 (LLLI…HLLY), 254 to 274 (WPGV…YLIE), 306 to 326 (IIAF…ICTF), 399 to 419 (IVEA…YMLP), and 449 to 469 (YVWL…VAEI). The FYXDWWN motif motif lies at 477–483 (FYRDWWN). The next 3 membrane-spanning stretches (helical) occupy residues 520 to 540 (GYFM…SIPF), 545 to 565 (LWGF…KNLM), and 570 to 590 (LGNV…VLLY). His532 is a catalytic residue.

It belongs to the membrane-bound acyltransferase family. Sterol o-acyltransferase subfamily.

It is found in the endoplasmic reticulum membrane. The catalysed reaction is an acyl-CoA + a 1,2-diacyl-sn-glycerol = a triacyl-sn-glycerol + CoA. It catalyses the reaction all-trans-retinol + an acyl-CoA = an all-trans-retinyl ester + CoA. The enzyme catalyses 2-(9Z-octadecenoyl)-glycerol + (9Z)-octadecenoyl-CoA = 1,2-di-(9Z-octadecenoyl)-sn-glycerol + CoA. It carries out the reaction 1,2-di-(9Z-octadecenoyl)-sn-glycerol + (9Z)-octadecenoyl-CoA = 1,2,3-tri-(9Z-octadecenoyl)-glycerol + CoA. The catalysed reaction is all-trans-retinol + hexadecanoyl-CoA = all-trans-retinyl hexadecanoate + CoA. It catalyses the reaction 1-O-(9Z-octadecenyl)-glycerol + (9Z)-octadecenoyl-CoA = 1-O-(9Z-octadecyl)-3-(9Z-octadecenoyl)-glycerol + CoA. The enzyme catalyses 1-O-(9Z-octadecyl)-3-(9Z-octadecenoyl)-glycerol + (9Z)-octadecenoyl-CoA = 1-O-(9Z-octadecenyl)-2,3-di-(9Z-octadecenoyl)glycerol + CoA. It carries out the reaction 1-(9Z-octadecenoyl)-glycerol + (9Z)-octadecenoyl-CoA = 1,2-di-(9Z-octadecenoyl)-glycerol + CoA. The catalysed reaction is 1,2-di-(9Z-octadecenoyl)-glycerol + (9Z)-octadecenoate + H(+) = 1,2,3-tri-(9Z-octadecenoyl)-glycerol + H2O. It catalyses the reaction 1-octadecanoyl-2-(5Z,8Z,11Z,14Z-eicosatetraenoyl)-sn-glycerol + (9Z)-octadecenoyl-CoA = 1-octadecanoyl-2-(5Z,8Z,11Z,14Z)-eicosatetraenoyl-3-(9Z)-octadecenoyl-sn-glycerol + CoA. The enzyme catalyses hexadecane-1,2-diol + 2 hexadecanoyl-CoA = 1,2-O,O-dihexadecanoyl-1,2-hexadecanediol + 2 CoA. It carries out the reaction hexadecane-1,2-diol + hexadecanoyl-CoA = 2-hydroxyhexadecyl hexadecanoate + CoA. The catalysed reaction is 2-(9Z-octadecenoyl)-glycerol + hexadecanoyl-CoA = 1-hexadecanoyl-2-(9Z-octadecenoyl)-sn-glycerol + CoA. It catalyses the reaction 1,2-di-(9Z-octadecenoyl)-sn-glycerol + hexadecanoyl-CoA = 1,2-di-(9Z)-octadecenoyl-3-hexadecanoyl-sn-glycerol + CoA. The enzyme catalyses hexadecan-1-ol + hexadecanoyl-CoA = hexadecanyl hexadecanoate + CoA. It carries out the reaction 13-cis-retinol + hexadecanoyl-CoA = 13-cis-retinyl hexadecanoate + CoA. The catalysed reaction is 1,3-di-(9Z-octadecenoyl)-glycerol + (9Z)-octadecenoyl-CoA = 1,2,3-tri-(9Z-octadecenoyl)-glycerol + CoA. It catalyses the reaction 2,3-di-(9Z)-octadecenoyl-sn-glycerol + (9Z)-octadecenoyl-CoA = 1,2,3-tri-(9Z-octadecenoyl)-glycerol + CoA. It participates in lipid metabolism; glycerolipid metabolism. Functionally, catalyzes the terminal and only committed step in triacylglycerol synthesis by using diacylglycerol and fatty acyl CoA as substrates. In Dictyostelium discoideum (Social amoeba), this protein is Diacylglycerol O-acyltransferase 1 (dgat1).